The sequence spans 90 residues: Protein LURE 1.4 (90 aa).

The N-terminal stretch at 1-19 is a signal peptide; it reads MKCPSIFLTLLIFVSSCTS. Asparagine 23 carries N-linked (GlcNAc...) asparagine glycosylation. Intrachain disulfides connect cysteine 58–cysteine 75, cysteine 61–cysteine 82, and cysteine 65–cysteine 84. Positions 67 to 87 are PRK6 binding; it reads RRGKYIRTCSFERKLCRCSIS.

The protein belongs to the DEFL family. In terms of assembly, binds to PRK6 LRRs. In terms of tissue distribution, expressed in the pistil. Detected exclusively in the synergid cells.

The protein localises to the secreted. Functionally, pollen tube attractants guiding pollen tubes to the ovular micropyle. The chain is Protein LURE 1.4 from Arabidopsis thaliana (Mouse-ear cress).